The primary structure comprises 145 residues: 3-dehydroquinate dehydratase (145 aa).

Catalysis depends on tyrosine 22, which acts as the Proton acceptor. Substrate-binding residues include asparagine 73, histidine 79, and aspartate 86. Histidine 99 serves as the catalytic Proton donor. Residues 100–101 (LS) and arginine 110 each bind substrate.

It belongs to the type-II 3-dehydroquinase family. As to quaternary structure, homododecamer.

It carries out the reaction 3-dehydroquinate = 3-dehydroshikimate + H2O. The protein operates within metabolic intermediate biosynthesis; chorismate biosynthesis; chorismate from D-erythrose 4-phosphate and phosphoenolpyruvate: step 3/7. Functionally, catalyzes a trans-dehydration via an enolate intermediate. This is 3-dehydroquinate dehydratase from Prochlorococcus marinus (strain NATL1A).